The primary structure comprises 500 residues: Probable serine carboxypeptidase CPVL (500 aa).

An N-terminal signal peptide occupies residues 1–23 (MKVSLSFLLTILIVIITIKVNLS). N-linked (GlcNAc...) asparagine glycans are attached at residues N110 and N161. Residue S233 is part of the active site. N-linked (GlcNAc...) asparagine glycosylation is found at N333 and N360. Residues D414 and H474 contribute to the active site.

It belongs to the peptidase S10 family.

It localises to the secreted. Its function is as follows. May be involved in the digestion of phagocytosed particles in the lysosome, participation in an inflammatory protease cascade, and trimming of peptides for antigen presentation. This is Probable serine carboxypeptidase CPVL (cpvl) from Dictyostelium discoideum (Social amoeba).